The chain runs to 291 residues: Transcription factor TYE7 (291 aa).

Residues 89-109 (FPTDQFFSNPSSYSHSPEVSS) form a disordered region. The span at 96–109 (SNPSSYSHSPEVSS) shows a compositional bias: low complexity. Phosphoserine is present on Ser-104. The bHLH domain occupies 180–265 (FQKQAHNKIE…EKAVDYILYL (86 aa)). Residues His-185, Glu-189, and Arg-193 each contribute to the DNA site. The interval 221 to 245 (DSVKKQDEDGAETAATTPLPSAAAT) is disordered. Residues 233–245 (TAATTPLPSAAAT) are compositionally biased toward low complexity. Residue Thr-237 is modified to Phosphothreonine.

In terms of assembly, homodimer. Efficient DNA binding requires dimerization with another bHLH protein.

It is found in the nucleus. Functionally, transcriptional activator of glycolytic gene expression, such as enolase genes (ENO1 and ENO2), glyceraldehyde-3-phosphate dehydrogenase gene (TDH), phosphoglycerate kinase (PGK1), phosphoglycerate mutase (PGM1), pyruvate kinase (PYK1) and triosephosphate isomerase (TPI1) genes. Binds DNA on E-box motifs: 5'-CANNTG-3'. In response to adenylic nucleotide reduction, activates Ty1 mRNA transcription, possibly by controlling Ty1 antisense transcription. Acts as a cell cycle transcription factor. Its function may also be linked to sulfur metabolism and the cross-regulation between phosphate and sulfate metabolism. In Saccharomyces cerevisiae (strain ATCC 204508 / S288c) (Baker's yeast), this protein is Transcription factor TYE7.